The following is a 96-amino-acid chain: HIG1 domain family member 1C (96 aa).

Residues 1–26 lie on the Cytoplasmic side of the membrane; sequence MSSDEWSAAEDEGQLSRLLRKSRDSP. Residues 1–91 enclose the HIG1 domain; the sequence is MSSDEWSAAE…YKDYIRPRFF (91 aa). The helical transmembrane segment at 27 to 44 threads the bilayer; it reads FVPVGMAGFVAVLSYGLY. Residues 45-58 are Extracellular-facing; sequence KLNSRREQKMSLHL. The helical transmembrane segment at 59-81 threads the bilayer; the sequence is IHVRVAAQGCVVGAVTLGVLYSM. Residues 82–96 lie on the Cytoplasmic side of the membrane; the sequence is YKDYIRPRFFNVPKK.

It localises to the membrane. The polypeptide is HIG1 domain family member 1C (Higd1c) (Mus musculus (Mouse)).